Here is a 385-residue protein sequence, read N- to C-terminus: Homoserine O-succinyltransferase (385 aa).

One can recognise an AB hydrolase-1 domain in the interval 45-355; the sequence is NAVLVCHALN…PHGHDAFLLD (311 aa). The active-site Nucleophile is the serine 151. Arginine 221 provides a ligand contact to substrate. Active-site residues include aspartate 316 and histidine 349. Aspartate 350 is a substrate binding site.

This sequence belongs to the AB hydrolase superfamily. MetX family. Homodimer.

Its subcellular location is the cytoplasm. The enzyme catalyses L-homoserine + succinyl-CoA = O-succinyl-L-homoserine + CoA. It functions in the pathway amino-acid biosynthesis; L-methionine biosynthesis via de novo pathway; O-succinyl-L-homoserine from L-homoserine: step 1/1. Functionally, transfers a succinyl group from succinyl-CoA to L-homoserine, forming succinyl-L-homoserine. The polypeptide is Homoserine O-succinyltransferase (Janthinobacterium sp. (strain Marseille) (Minibacterium massiliensis)).